Consider the following 261-residue polypeptide: Segregation and condensation protein A (261 aa).

Belongs to the ScpA family. Component of a cohesin-like complex composed of ScpA, ScpB and the Smc homodimer, in which ScpA and ScpB bind to the head domain of Smc. The presence of the three proteins is required for the association of the complex with DNA.

Its subcellular location is the cytoplasm. Participates in chromosomal partition during cell division. May act via the formation of a condensin-like complex containing Smc and ScpB that pull DNA away from mid-cell into both cell halves. In Desulfitobacterium hafniense (strain DSM 10664 / DCB-2), this protein is Segregation and condensation protein A.